Here is a 180-residue protein sequence, read N- to C-terminus: Putative manganese efflux pump MntP (180 aa).

5 consecutive transmembrane segments (helical) span residues 6-26 (VLLL…GLGL), 33-53 (MAWM…VAGW), 63-83 (VGRW…VKMV), 101-121 (GFLG…SVGF), and 130-150 (LLLT…AAFV).

The protein belongs to the MntP (TC 9.B.29) family.

It localises to the cell membrane. Probably functions as a manganese efflux pump. In Desulforudis audaxviator (strain MP104C), this protein is Putative manganese efflux pump MntP.